The chain runs to 294 residues: UPF0718 protein YcgR (294 aa).

8 consecutive transmembrane segments (helical) span residues 15–35 (ISILIEAIPFILIGVILSGII), 54–74 (LAVLFGALAGVLFPACECGII), 92–112 (AFMLTAPIINPIVLFSTYIAF), 117–137 (SVVFYRGGLALAVSLIIGVIL), 174–194 (IDEFFSVGKYLIIGAFIAAAM), 215–235 (LVMMGLAFVLSLCSEVDAFIA), 247–267 (LIAFLVFGAMVDIKNLLMMLA), and 273–293 (FVFLLITYIVVIVLAGSLLVK).

This sequence belongs to the UPF0718 family.

The protein localises to the cell membrane. This chain is UPF0718 protein YcgR (ycgR), found in Bacillus subtilis (strain 168).